Reading from the N-terminus, the 372-residue chain is Citrate synthase 2 (372 aa).

The active site involves histidine 257. Serine 284 carries the phosphoserine modification. Residue aspartate 308 is part of the active site.

It belongs to the citrate synthase family. In terms of assembly, homodimer.

The enzyme catalyses oxaloacetate + acetyl-CoA + H2O = citrate + CoA + H(+). It participates in carbohydrate metabolism; tricarboxylic acid cycle; isocitrate from oxaloacetate: step 1/2. Might regulate the synthesis and function of enzymes involved in later enzymatic steps of Krebs cycle. Loss in activity results in sporulation defect. The chain is Citrate synthase 2 (citZ) from Bacillus subtilis (strain 168).